Reading from the N-terminus, the 369-residue chain is Anhydro-N-acetylmuramic acid kinase (369 aa).

Residue 12–19 participates in ATP binding; sequence GTSMDGVD.

Belongs to the anhydro-N-acetylmuramic acid kinase family.

The catalysed reaction is 1,6-anhydro-N-acetyl-beta-muramate + ATP + H2O = N-acetyl-D-muramate 6-phosphate + ADP + H(+). Its pathway is amino-sugar metabolism; 1,6-anhydro-N-acetylmuramate degradation. It functions in the pathway cell wall biogenesis; peptidoglycan recycling. Its function is as follows. Catalyzes the specific phosphorylation of 1,6-anhydro-N-acetylmuramic acid (anhMurNAc) with the simultaneous cleavage of the 1,6-anhydro ring, generating MurNAc-6-P. Is required for the utilization of anhMurNAc either imported from the medium or derived from its own cell wall murein, and thus plays a role in cell wall recycling. This chain is Anhydro-N-acetylmuramic acid kinase, found in Shewanella baltica (strain OS155 / ATCC BAA-1091).